The primary structure comprises 459 residues: Glutamate--isopropylamine ligase (459 aa).

The region spanning 19 to 115 (HNIDTIRLGA…VLCDIQHLNG (97 aa)) is the GS beta-grasp domain. Residues 122–459 (PRNLLRKAIE…WELARYLDII (338 aa)) form the GS catalytic domain.

Belongs to the glutamine synthetase family.

The catalysed reaction is isopropylamine + L-glutamate + ATP = gamma-L-glutamyl-isopropylamide + ADP + phosphate + H(+). In terms of biological role, involved in the degradation of isopropylamine, which is a constituent of the herbicides atrazine. Catalyzes the ATP-dependent formation of gamma-glutamyl-isopropylamide from isopropylamine and L-glutamate. It can also use aminoalkanes, amino-alcohols (L-alaninol and D-alaninol) and amino-esters as substrates. This Pseudomonas sp protein is Glutamate--isopropylamine ligase (ipuC).